Reading from the N-terminus, the 115-residue chain is DNA-binding protein STK_13740 (115 aa).

This sequence belongs to the PDCD5 family.

This is DNA-binding protein STK_13740 from Sulfurisphaera tokodaii (strain DSM 16993 / JCM 10545 / NBRC 100140 / 7) (Sulfolobus tokodaii).